Here is a 494-residue protein sequence, read N- to C-terminus: Glycerol kinase (494 aa).

Threonine 13 serves as a coordination point for ADP. Positions 13, 14, and 15 each coordinate ATP. Threonine 13 provides a ligand contact to sn-glycerol 3-phosphate. An ADP-binding site is contributed by arginine 17. 4 residues coordinate sn-glycerol 3-phosphate: arginine 83, glutamate 84, tyrosine 135, and aspartate 244. Arginine 83, glutamate 84, tyrosine 135, aspartate 244, and glutamine 245 together coordinate glycerol. ADP is bound by residues threonine 266 and glycine 309. ATP contacts are provided by threonine 266, glycine 309, glutamine 313, and glycine 410. Glycine 410 and asparagine 414 together coordinate ADP.

This sequence belongs to the FGGY kinase family.

It catalyses the reaction glycerol + ATP = sn-glycerol 3-phosphate + ADP + H(+). The protein operates within polyol metabolism; glycerol degradation via glycerol kinase pathway; sn-glycerol 3-phosphate from glycerol: step 1/1. With respect to regulation, inhibited by fructose 1,6-bisphosphate (FBP). Functionally, key enzyme in the regulation of glycerol uptake and metabolism. Catalyzes the phosphorylation of glycerol to yield sn-glycerol 3-phosphate. This is Glycerol kinase from Shewanella baltica (strain OS223).